The following is a 403-amino-acid chain: Tyrosine--tRNA ligase (403 aa).

The 'HIGH' region signature appears at 46 to 55 (PTAPDLHLGH). A 'KMSKS' region motif is present at residues 230–234 (KMSKS). Lys233 is an ATP binding site. The S4 RNA-binding domain maps to 342 to 402 (LFITQILNQA…GKKAYAKVTV (61 aa)).

Belongs to the class-I aminoacyl-tRNA synthetase family. TyrS type 2 subfamily. As to quaternary structure, homodimer.

The protein localises to the cytoplasm. It carries out the reaction tRNA(Tyr) + L-tyrosine + ATP = L-tyrosyl-tRNA(Tyr) + AMP + diphosphate + H(+). Its function is as follows. Catalyzes the attachment of tyrosine to tRNA(Tyr) in a two-step reaction: tyrosine is first activated by ATP to form Tyr-AMP and then transferred to the acceptor end of tRNA(Tyr). This Psychrobacter arcticus (strain DSM 17307 / VKM B-2377 / 273-4) protein is Tyrosine--tRNA ligase.